We begin with the raw amino-acid sequence, 469 residues long: 3-isopropylmalate dehydratase large subunit (469 aa).

Cysteine 349, cysteine 409, and cysteine 412 together coordinate [4Fe-4S] cluster. The interval 424–443 (QISASSSNRNFKGRQGSPSG) is disordered.

Belongs to the aconitase/IPM isomerase family. LeuC type 1 subfamily. As to quaternary structure, heterodimer of LeuC and LeuD. [4Fe-4S] cluster serves as cofactor.

It carries out the reaction (2R,3S)-3-isopropylmalate = (2S)-2-isopropylmalate. The protein operates within amino-acid biosynthesis; L-leucine biosynthesis; L-leucine from 3-methyl-2-oxobutanoate: step 2/4. In terms of biological role, catalyzes the isomerization between 2-isopropylmalate and 3-isopropylmalate, via the formation of 2-isopropylmaleate. This Thermosynechococcus vestitus (strain NIES-2133 / IAM M-273 / BP-1) protein is 3-isopropylmalate dehydratase large subunit.